Here is a 190-residue protein sequence, read N- to C-terminus: Ribosome maturation factor RimP (190 aa).

Positions 159 to 190 are disordered; the sequence is ELELAGGIPEGRVAPADADASEDEEVVEGLDK. The segment covering 177–190 has biased composition (acidic residues); that stretch reads DASEDEEVVEGLDK.

The protein belongs to the RimP family.

The protein resides in the cytoplasm. Required for maturation of 30S ribosomal subunits. This is Ribosome maturation factor RimP from Rhodococcus opacus (strain B4).